The following is a 258-amino-acid chain: Acyl-[acyl-carrier-protein]--UDP-N-acetylglucosamine O-acyltransferase (258 aa).

It belongs to the transferase hexapeptide repeat family. LpxA subfamily. In terms of assembly, homotrimer.

The protein localises to the cytoplasm. It carries out the reaction a (3R)-hydroxyacyl-[ACP] + UDP-N-acetyl-alpha-D-glucosamine = a UDP-3-O-[(3R)-3-hydroxyacyl]-N-acetyl-alpha-D-glucosamine + holo-[ACP]. Its pathway is glycolipid biosynthesis; lipid IV(A) biosynthesis; lipid IV(A) from (3R)-3-hydroxytetradecanoyl-[acyl-carrier-protein] and UDP-N-acetyl-alpha-D-glucosamine: step 1/6. Functionally, involved in the biosynthesis of lipid A, a phosphorylated glycolipid that anchors the lipopolysaccharide to the outer membrane of the cell. In Pseudomonas putida (strain W619), this protein is Acyl-[acyl-carrier-protein]--UDP-N-acetylglucosamine O-acyltransferase.